We begin with the raw amino-acid sequence, 261 residues long: THO complex subunit THP2 (261 aa).

Component of the THO complex, which is composed of HPR1, MFT1, THO2 and THP2. Together with SUB2, TEX1 and YRA1, THO forms the transcription/export (TREX) complex. THO associates with DNA and RNA in vitro.

It is found in the nucleus. In terms of biological role, component the THO subcomplex of the TREX complex, which operates in coupling transcription elongation to mRNA export. The THO complex is recruited to transcribed genes and moves along the gene with the elongating polymerase during transcription. THO is important for stabilizing nascent RNA in the RNA polymerase II elongation complex by preventing formation of DNA:RNA hybrids behind the elongating polymerase. It functions in cotranscriptional formation of an export-competent messenger ribonucleoprotein particle (mRNP) by facilitating the loading of ATP-dependent RNA helicase SUB2 and the mRNA export factor YRA1 along the nascent mRNA. This Saccharomyces cerevisiae (strain ATCC 204508 / S288c) (Baker's yeast) protein is THO complex subunit THP2 (THP2).